The following is a 242-amino-acid chain: Succinyl-CoA:3-ketoacid coenzyme A transferase subunit A (242 aa).

33-39 is a binding site for CoA; it reads GGFGLCG.

This sequence belongs to the 3-oxoacid CoA-transferase subunit A family. In terms of assembly, heterodimer of a subunit A and a subunit B.

The enzyme catalyses a 3-oxo acid + succinyl-CoA = a 3-oxoacyl-CoA + succinate. The protein operates within bacterial outer membrane biogenesis; lipopolysaccharide biosynthesis. The sequence is that of Succinyl-CoA:3-ketoacid coenzyme A transferase subunit A (lpsI) from Xanthomonas campestris pv. campestris (strain B100).